Consider the following 138-residue polypeptide: Putative nickel-responsive regulator (138 aa).

Ni(2+) is bound by residues H76, H87, H89, and C95.

The protein belongs to the transcriptional regulatory CopG/NikR family. It depends on Ni(2+) as a cofactor.

In terms of biological role, transcriptional regulator. The polypeptide is Putative nickel-responsive regulator (Pseudomonas putida (strain W619)).